Consider the following 44-residue polypeptide: Opistoporin-2 (44 aa).

As to expression, expressed by the venom gland.

Its subcellular location is the secreted. It localises to the target cell membrane. At high concentrations, acts as a pore former in cellular membranes and causes the leakage of the cells. At submicromolar concentrations, degranulates granulocytes and has a weak hemolytic activity against human erythrocytes. Also strongly inhibits the production of superoxide anions. Has a strong antibacterial activity against Gram-negative bacteria but is less active against Gram-positive bacteria. Also has antifungal activity. The polypeptide is Opistoporin-2 (Opistophthalmus carinatus (African yellow leg scorpion)).